The primary structure comprises 71 residues: UPF0434 protein Csal_1588 (71 aa).

The protein belongs to the UPF0434 family.

The sequence is that of UPF0434 protein Csal_1588 from Chromohalobacter salexigens (strain ATCC BAA-138 / DSM 3043 / CIP 106854 / NCIMB 13768 / 1H11).